The following is a 478-amino-acid chain: Putative sulfate transporter YbaR (478 aa).

The next 12 membrane-spanning stretches (helical) occupy residues 19-39 (ILAG…FSII), 42-62 (VDPM…SIFG), 65-85 (PGMI…LVAD), 87-107 (GLQY…ILGI), 121-141 (VMIG…LPQF), 143-163 (GASW…YVLP), 168-188 (AVPS…TFHV), 220-240 (IIFP…LLTA), 259-279 (GQGI…CAMI), 295-315 (SAFV…HVVV), 345-365 (APLT…VTDD), and 366-386 (LSKG…AKIS). The STAS domain maps to 389 to 478 (KIVSHAEDQK…ASKSLMKQMA (90 aa)).

This sequence belongs to the SLC26A/SulP transporter (TC 2.A.53) family.

Its subcellular location is the cell membrane. This is Putative sulfate transporter YbaR (ybaR) from Bacillus subtilis (strain 168).